The primary structure comprises 738 residues: Prolyl oligopeptidase A (738 aa).

Active-site charge relay system residues include serine 581, aspartate 665, and histidine 701.

Belongs to the peptidase S9A family. Monomer.

The catalysed reaction is Hydrolysis of Pro-|-Xaa &gt;&gt; Ala-|-Xaa in oligopeptides.. Its function is as follows. Housekeeping prolyl oligopeptidase (POP) that behaves like a conventional POP by cleaving peptide bonds on the C-terminal side of prolyl residues within peptides that are up to approximately 30 amino acids long. This Galerina marginata (strain CBS 339.88) protein is Prolyl oligopeptidase A.